Reading from the N-terminus, the 441-residue chain is Tol-Pal system protein TolB (441 aa).

A signal peptide spans 1-39; it reads MPTMTPAFSRASLSEALRSYGLALLLFLATLLAWQPAHA.

Belongs to the TolB family. The Tol-Pal system is composed of five core proteins: the inner membrane proteins TolA, TolQ and TolR, the periplasmic protein TolB and the outer membrane protein Pal. They form a network linking the inner and outer membranes and the peptidoglycan layer.

The protein resides in the periplasm. Its function is as follows. Part of the Tol-Pal system, which plays a role in outer membrane invagination during cell division and is important for maintaining outer membrane integrity. The chain is Tol-Pal system protein TolB from Bordetella avium (strain 197N).